The primary structure comprises 342 residues: Cathepsin B-like cysteine proteinase (342 aa).

The first 17 residues, methionine 1–alanine 17, serve as a signal peptide directing secretion. Positions histidine 18–glutamate 89 are cleaved as a propeptide — activation peptide. Cystine bridges form between cysteine 103–cysteine 132, cysteine 115–cysteine 159, cysteine 151–cysteine 217, cysteine 152–cysteine 155, cysteine 188–cysteine 221, and cysteine 196–cysteine 207. The active site involves cysteine 118. Active-site residues include histidine 288 and asparagine 308.

It belongs to the peptidase C1 family. Intestine (gut).

Its function is as follows. Thiol protease. Has a role as a digestive enzyme. In Schistosoma japonicum (Blood fluke), this protein is Cathepsin B-like cysteine proteinase (CATB).